Consider the following 241-residue polypeptide: Dolichol-phosphate mannosyltransferase subunit 1 (241 aa).

The GDP-alpha-D-mannose site is built by Pro-13, Tyr-15, Glu-17, Ile-44, Asp-46, Asp-99, Ala-100, Asp-101, Arg-128, Arg-215, and Lys-221. Residue Asp-101 coordinates Mg(2+). Asp-101 is a Mn(2+) binding site.

The protein belongs to the glycosyltransferase 2 family. The cofactor is Mg(2+). Mn(2+) is required as a cofactor. Requires Ca(2+) as cofactor.

The protein localises to the endoplasmic reticulum. It carries out the reaction a di-trans,poly-cis-dolichyl phosphate + GDP-alpha-D-mannose = a di-trans,poly-cis-dolichyl beta-D-mannosyl phosphate + GDP. Its pathway is protein modification; protein glycosylation. In terms of biological role, transfers mannose from GDP-mannose to dolichol monophosphate to form dolichol phosphate mannose (Dol-P-Man) which is the mannosyl donor in pathways leading to N-glycosylation, glycosyl phosphatidylinositol membrane anchoring, and O-mannosylation of proteins. This is Dolichol-phosphate mannosyltransferase subunit 1 from Drosophila melanogaster (Fruit fly).